Reading from the N-terminus, the 188-residue chain is Mediator of RNA polymerase II transcription subunit 29 (188 aa).

Composition is skewed to low complexity over residues 1-23 (MNPN…QSSP) and 30-43 (VQHQ…PLQQ). The tract at residues 1 to 43 (MNPNMNMMPMSGPQMMQVMQSSPSGPPGPVQHQQQQPPQPLQQ) is disordered.

Belongs to the Mediator complex subunit 29 family. Component of the Mediator complex. Self-associates. Interacts with dsx.

Its subcellular location is the nucleus. Component of the Mediator complex, a coactivator involved in the regulated transcription of nearly all RNA polymerase II-dependent genes. Mediator functions as a bridge to convey information from gene-specific regulatory proteins to the basal RNA polymerase II transcription machinery. Mediator is recruited to promoters by direct interactions with regulatory proteins and serves as a scaffold for the assembly of a functional preinitiation complex with RNA polymerase II and the general transcription factors. Required for female somatic sexual development. The polypeptide is Mediator of RNA polymerase II transcription subunit 29 (ix) (Drosophila melanogaster (Fruit fly)).